A 3414-amino-acid polypeptide reads, in one-letter code: Hemocyanin 1 (3414 aa).

A signal peptide spans 1–16 (MLSVRLLIVVLALANA). Glutamate 17 contributes to the a divalent metal cation binding site. The interval 17–437 (ENLVRKSVEH…PPVKHHQSAN (421 aa)) is functional unit a (wall). Residue histidine 58 participates in Cu cation binding. A disulfide bond links cysteine 64 and cysteine 73. Residues 74 to 76 (CIH) constitute a cross-link (2'-(S-cysteinyl)-histidine (Cys-His)). Residues histidine 76, histidine 85, histidine 195, histidine 199, and histidine 226 each contribute to the Cu cation site. Cysteine 185 and cysteine 252 are joined by a disulfide. The segment at residues 287-290 (CELH) is a cross-link (2'-(S-cysteinyl)-histidine (Cys-His)). An intrachain disulfide couples cysteine 339 to cysteine 351. Asparagine 403 carries an N-linked (GlcNAc...) asparagine glycan. A functional unit b (wall) region spans residues 438 to 851 (LLVRKNINDL…RVKFDKVPRS (414 aa)). Histidine 478 lines the Cu cation pocket. Cysteines 484 and 495 form a disulfide. The segment at residues 496 to 498 (CVH) is a cross-link (2'-(S-cysteinyl)-histidine (Cys-His)). Cu cation-binding residues include histidine 498 and histidine 507. Asparagine 545 carries N-linked (GlcNAc...) asparagine glycosylation. Residues cysteine 608 and cysteine 674 are joined by a disulfide bond. Residues histidine 618, histidine 622, and histidine 649 each coordinate Cu cation. The stretch at 628–669 (SEHFSMSSLHYTAFDPLFYFHHSNVDRLWAVWQALQMRRHKP) is one WD 1 repeat. Glutamate 737 contributes to the a divalent metal cation binding site. The segment at 852–1271 (RLIRKNVDRL…EVYQAEVTSA (420 aa)) is functional unit c (wall). A Cu cation-binding site is contributed by histidine 892. A disulfide bridge links cysteine 898 with cysteine 909. A cross-link (2'-(S-cysteinyl)-histidine (Cys-His)) is located at residues 910 to 912 (CVH). Cu cation contacts are provided by histidine 912, histidine 921, histidine 1031, histidine 1035, and histidine 1062. 2 disulfides stabilise this stretch: cysteine 1021/cysteine 1088 and cysteine 1178/cysteine 1184. The WD 2 repeat unit spans residues 1041–1082 (AQPYGMASLRYTAFDPLFYLHHSNTDRIWAIWQALQKYRGKP). The interval 1272–1680 (NRIRKNIENL…AHTDDGHTEP (409 aa)) is functional unit d (wall). Residue histidine 1309 participates in Cu cation binding. Cysteine 1315 and cysteine 1324 are joined by a disulfide. Residues 1325–1327 (CVH) constitute a cross-link (2'-(S-cysteinyl)-histidine (Cys-His)). Cu cation-binding residues include histidine 1327, histidine 1336, histidine 1440, histidine 1444, and histidine 1471. Cystine bridges form between cysteine 1430–cysteine 1497 and cysteine 1585–cysteine 1595. The stretch at 1450–1491 (KGKYSMSNLDYAAFDPVFFLHHATTDRIWAIWQDLQRFRKRP) is one WD 3 repeat. Asparagine 1648 is a glycosylation site (N-linked (GlcNAc...) asparagine). Residues 1681–2097 (VMIRKDITQL…HDISSHHLSL (417 aa)) form a functional unit e (wall) region. Histidine 1721 serves as a coordination point for Cu cation. Residues cysteine 1727 and cysteine 1738 are joined by a disulfide bond. Positions 1739-1741 (CVH) form a cross-link, 2'-(S-cysteinyl)-histidine (Cys-His). Cu cation contacts are provided by histidine 1741, histidine 1750, histidine 1863, histidine 1867, and histidine 1894. 2 disulfide bridges follow: cysteine 1853-cysteine 1920 and cysteine 2009-cysteine 2015. A WD 4 repeat occupies 1873 to 1914 (KEPYGIGHLHYASYDPLFYIHHSQTDRIWAIWQSLQRFRGLS). The interval 2098-2517 (NKVRHDLSTL…EDHHSSSMAG (420 aa)) is functional unit f (wall). Histidine 2138 provides a ligand contact to Cu cation. Cysteine 2144 and cysteine 2154 are disulfide-bonded. Asparagine 2145 carries N-linked (GlcNAc...) asparagine glycosylation. The segment at residues 2155–2157 (CIH) is a cross-link (2'-(S-cysteinyl)-histidine (Cys-His)). Cu cation contacts are provided by histidine 2157, histidine 2166, histidine 2276, histidine 2280, and histidine 2307. The stretch at 2163–2199 (PHWHRLYTLQFEQALRRHGSSVAVPYWDWTKPIHNIP) is one WD 5 repeat. Disulfide bonds link cysteine 2266–cysteine 2333 and cysteine 2420–cysteine 2426. Glutamate 2424 contributes to the a divalent metal cation binding site. A functional unit g (internal arc) region spans residues 2518 to 2921 (HGVRKEINTL…EKHHEDHHED (404 aa)). Residue histidine 2558 participates in Cu cation binding. Cysteines 2564 and 2574 form a disulfide. A glycan (N-linked (GlcNAc...) asparagine) is linked at asparagine 2571. Residues 2575 to 2577 (CTH) constitute a cross-link (2'-(S-cysteinyl)-histidine (Cys-His)). Cu cation contacts are provided by histidine 2577, histidine 2586, histidine 2686, histidine 2690, and histidine 2717. Cystine bridges form between cysteine 2676/cysteine 2743 and cysteine 2830/cysteine 2836. One copy of the WD 6 repeat lies at 2696–2737 (LTPYGMSTLEYTTYDPLFWLHHANTDRIWAIWQALQEYRGLP). The interval 2922-3414 (ILVRKNIHSL…LRIHVHVDDE (493 aa)) is functional unit h (internal slab). A Cu cation-binding site is contributed by histidine 2962. Cysteine 2968 and cysteine 2978 are joined by a disulfide. A cross-link (2'-(S-cysteinyl)-histidine (Cys-His)) is located at residues 2979–2981 (CVH). Cu cation is bound by residues histidine 2981, histidine 2990, histidine 3091, histidine 3095, and histidine 3122. Cysteine 3081 and cysteine 3148 are oxidised to a cystine. Residues 3101-3142 (AEKYSMSTLEYSAFDPYFMIHHASLDKIWIIWQELQKRRVKP) form a WD 7 repeat. Asparagine 3278 carries an N-linked (GlcNAc...) asparagine glycan. Cysteine 3367 and cysteine 3400 are disulfide-bonded.

It belongs to the tyrosinase family. Hemocyanin subfamily. As to quaternary structure, homo-didecamer, with two decamers assembled face-to-face at their open ends. This didecamer form a stable 25 nM cylinder wall. In terms of processing, probably N-glycosylated. Asn-1280 and Asn-2484 are buried deeply in the protein which make them inaccessible for sugar attachment. Asn-3278 N-glycan is likely to represent a diantennate carbohydrate tree. The didecamer is almost evenly tagged by a total of 120 sugar trees. Hemolymph.

It localises to the secreted. The protein localises to the extracellular space. In terms of biological role, hemocyanins are copper-containing oxygen carriers occurring freely dissolved in the hemolymph of many mollusks and arthropods. This Megathura crenulata (Giant keyhole limpet) protein is Hemocyanin 1.